The chain runs to 520 residues: 2-isopropylmalate synthase (520 aa).

Residues 12 to 274 form the Pyruvate carboxyltransferase domain; that stretch reads IRIFDTTLRD…DSAINTPRIV (263 aa). 4 residues coordinate Mn(2+): aspartate 21, histidine 209, histidine 211, and asparagine 245. The regulatory domain stretch occupies residues 396–520; it reads RLASMTISDV…VVAGKTAAVA (125 aa).

The protein belongs to the alpha-IPM synthase/homocitrate synthase family. LeuA type 1 subfamily. In terms of assembly, homodimer. The cofactor is Mn(2+).

The protein resides in the cytoplasm. The catalysed reaction is 3-methyl-2-oxobutanoate + acetyl-CoA + H2O = (2S)-2-isopropylmalate + CoA + H(+). Its pathway is amino-acid biosynthesis; L-leucine biosynthesis; L-leucine from 3-methyl-2-oxobutanoate: step 1/4. Its function is as follows. Catalyzes the condensation of the acetyl group of acetyl-CoA with 3-methyl-2-oxobutanoate (2-ketoisovalerate) to form 3-carboxy-3-hydroxy-4-methylpentanoate (2-isopropylmalate). The protein is 2-isopropylmalate synthase of Xanthomonas euvesicatoria pv. vesicatoria (strain 85-10) (Xanthomonas campestris pv. vesicatoria).